The sequence spans 233 residues: Translation initiation factor 6 (233 aa).

It belongs to the eIF-6 family.

Its function is as follows. Binds to the 50S ribosomal subunit and prevents its association with the 30S ribosomal subunit to form the 70S initiation complex. The chain is Translation initiation factor 6 from Aeropyrum pernix (strain ATCC 700893 / DSM 11879 / JCM 9820 / NBRC 100138 / K1).